Consider the following 60-residue polypeptide: Arabinogalactan protein 14 (60 aa).

An N-terminal signal peptide occupies residues 1–28; the sequence is MEAMKMKLYVVVLVAVIAFSTVHQTVAA. 4-hydroxyproline is present on residues Pro-32, Pro-34, and Pro-36. Pro-32, Pro-34, and Pro-36 each carry an O-linked (Ara...) hydroxyproline glycan. The GPI-anchor amidated serine moiety is linked to residue Ser-38. Residues 39 to 60 constitute a propeptide, removed in mature form; sequence DASSFIPTFFASVAVMAFGFFF.

Belongs to the AG-peptide AGP family. In terms of processing, contains 4-hydroxyproline; hydroxylated on Pro-32, Pro-34 and Pro-36. Post-translationally, O-glycosylated on hydroxyprolines; noncontiguous hydroxylproline residues are glycosylated with arabinogalactan.

It is found in the cell membrane. Its function is as follows. Proteoglycan that seems to be implicated in diverse developmental roles such as differentiation, cell-cell recognition, embryogenesis and programmed cell death. Involved in the regulation of root hair elongation. This chain is Arabinogalactan protein 14, found in Arabidopsis thaliana (Mouse-ear cress).